The sequence spans 245 residues: MKAKVIDAVSFSYILRTVGDFLSEANFIVTKEGIRVSGIDPSRVVFLDIFLPSSYFEGFEVSQEKEIIGFKLEDVNDILKRVLKDDTLILSSNESKLTLTFDGEFTRSFELPLIQVESTQPPSVNLEFPFKAQLLTITFADIIDELSDLGEVLNIHSKENKLYFEVIGDLSTAKVELSTDNGTLLEASGADVSSSYGMEYVANTTKMRRASDSMELYFGSQIPLKLRFKLPQEGYGDFYIAPRAD.

The protein belongs to the PCNA family. As to quaternary structure, forms homodimers with PCNA1, which then recruit PCNA3; does not form homotrimers. The heterodimers interact with RfcS homotetramers. Heterotrimer which circularizes head-to-tail (head is at N-terminus, tail is at C-terminus) to form a toroid; DNA passes through its center. Replication factor C (RFC) is required to load the toroid on the DNA. This subunit interacts with DNA polymerase I (dpo1). The heterotrimer also interacts with flap endonuclease 1, DNA ligase and XPF via the other subunits.

Its function is as follows. One of the sliding clamp subunits that acts as a moving platform for DNA processing. Responsible for tethering the catalytic subunit of DNA polymerase to DNA during high-speed replication. Heterotrimer stimulates the Holliday junction resolvase Hjc. DNA polymerase I, DNA ligase and the flap endonuclease may be constitutively associated with the PCNA heterotrimer forming a scanning complex able to couple DNA synthesis and Okazaki fragment maturation. The sequence is that of DNA polymerase sliding clamp 2 from Saccharolobus solfataricus (strain ATCC 35092 / DSM 1617 / JCM 11322 / P2) (Sulfolobus solfataricus).